A 922-amino-acid chain; its full sequence is Two-component sensor PprA (922 aa).

The segment covering 1–10 has biased composition (low complexity); sequence MFEFSRSSSA. Residues 1-22 are disordered; it reads MFEFSRSSSAEAERPEPFSQEG. Residues 506 to 558 enclose the PAC 1 domain; the sequence is VKTRYRLADGQGNWHWLYDEAKLLRDAQGLPSEAVGLWLDVTEQHLAAQRIAE. The PAS domain occupies 559 to 622; the sequence is SEERYRVLVE…EDASALRARL (64 aa). One can recognise a PAC 2 domain in the interval 632 to 684; the sequence is EVPELRFNLPGQRFLWLVWAERPLFDARGELCEVQAVGRDNTPVRRAQQQLAQ. Residues 697 to 916 form the Histidine kinase domain; that stretch reads GLAHEVKQPL…LFVVRLPLAA (220 aa). His700 is subject to Phosphohistidine; by autocatalysis.

In terms of processing, autophosphorylated.

The enzyme catalyses ATP + protein L-histidine = ADP + protein N-phospho-L-histidine.. In terms of biological role, member of the two-component regulatory system PprA/PprB involved in biofilm formation by controlling the expression of many related genes including type IVb pili major subunit flp pilin, adhesin bapA or cupE fimbriae. Functions as a heme sensor histidine kinase which is autophosphorylated at a histidine residue and transfers its phosphate group to PprB. The sequence is that of Two-component sensor PprA from Pseudomonas aeruginosa (strain ATCC 15692 / DSM 22644 / CIP 104116 / JCM 14847 / LMG 12228 / 1C / PRS 101 / PAO1).